Here is a 353-residue protein sequence, read N- to C-terminus: Photosystem II protein D1 (353 aa).

Threonine 2 is modified (N-acetylthreonine). Position 2 is a phosphothreonine (threonine 2). The next 3 helical transmembrane spans lie at 29 to 46 (YIGW…TATS), 118 to 133 (HFLL…EWEL), and 142 to 156 (WIAV…AATA). Histidine 118 serves as a coordination point for chlorophyll a. Tyrosine 126 is a pheophytin a binding site. [CaMn4O5] cluster-binding residues include aspartate 170 and glutamate 189. The chain crosses the membrane as a helical span at residues 197-218 (FHMLGVAGVFGGSLFSAMHGSL). Histidine 198 is a chlorophyll a binding site. A quinone is bound by residues histidine 215 and 264-265 (SF). Position 215 (histidine 215) interacts with Fe cation. Histidine 272 is a binding site for Fe cation. Residues 274 to 288 (FLAAWPVVGIWFTAL) form a helical membrane-spanning segment. Residues histidine 332, glutamate 333, aspartate 342, and alanine 344 each coordinate [CaMn4O5] cluster. Residues 345 to 353 (SVELDSIDG) constitute a propeptide that is removed on maturation.

Belongs to the reaction center PufL/M/PsbA/D family. In terms of assembly, PSII is composed of 1 copy each of membrane proteins PsbA, PsbB, PsbC, PsbD, PsbE, PsbF, PsbH, PsbI, PsbJ, PsbK, PsbL, PsbM, PsbT, PsbX, PsbY, PsbZ, Psb30/Ycf12, at least 3 peripheral proteins of the oxygen-evolving complex and a large number of cofactors. It forms dimeric complexes. The D1/D2 heterodimer binds P680, chlorophylls that are the primary electron donor of PSII, and subsequent electron acceptors. It shares a non-heme iron and each subunit binds pheophytin, quinone, additional chlorophylls, carotenoids and lipids. D1 provides most of the ligands for the Mn4-Ca-O5 cluster of the oxygen-evolving complex (OEC). There is also a Cl(-1) ion associated with D1 and D2, which is required for oxygen evolution. The PSII complex binds additional chlorophylls, carotenoids and specific lipids. is required as a cofactor. Tyr-161 forms a radical intermediate that is referred to as redox-active TyrZ, YZ or Y-Z. In terms of processing, C-terminally processed by CTPA; processing is essential to allow assembly of the oxygen-evolving complex and thus photosynthetic growth.

Its subcellular location is the plastid. It localises to the chloroplast thylakoid membrane. The catalysed reaction is 2 a plastoquinone + 4 hnu + 2 H2O = 2 a plastoquinol + O2. Photosystem II (PSII) is a light-driven water:plastoquinone oxidoreductase that uses light energy to abstract electrons from H(2)O, generating O(2) and a proton gradient subsequently used for ATP formation. It consists of a core antenna complex that captures photons, and an electron transfer chain that converts photonic excitation into a charge separation. The D1/D2 (PsbA/PsbD) reaction center heterodimer binds P680, the primary electron donor of PSII as well as several subsequent electron acceptors. In Gnetum parvifolium (Small-leaved jointfir), this protein is Photosystem II protein D1.